A 125-amino-acid polypeptide reads, in one-letter code: Holo-[acyl-carrier-protein] synthase (125 aa).

2 residues coordinate Mg(2+): D8 and E57.

The protein belongs to the P-Pant transferase superfamily. AcpS family. It depends on Mg(2+) as a cofactor.

Its subcellular location is the cytoplasm. It catalyses the reaction apo-[ACP] + CoA = holo-[ACP] + adenosine 3',5'-bisphosphate + H(+). In terms of biological role, transfers the 4'-phosphopantetheine moiety from coenzyme A to a Ser of acyl-carrier-protein. The sequence is that of Holo-[acyl-carrier-protein] synthase from Neisseria meningitidis serogroup A / serotype 4A (strain DSM 15465 / Z2491).